A 194-amino-acid chain; its full sequence is Small ribosomal subunit protein uS4c (194 aa).

The S4 RNA-binding domain occupies 82–143; the sequence is MRLDNILFRL…KERSKVLIQN (62 aa).

Belongs to the universal ribosomal protein uS4 family. Part of the 30S ribosomal subunit. Contacts protein S5. The interaction surface between S4 and S5 is involved in control of translational fidelity.

Its subcellular location is the plastid. It localises to the chloroplast. One of the primary rRNA binding proteins, it binds directly to 16S rRNA where it nucleates assembly of the body of the 30S subunit. Functionally, with S5 and S12 plays an important role in translational accuracy. The sequence is that of Small ribosomal subunit protein uS4c (rps4) from Cypella sp. (strain Porto Alegre 027).